Consider the following 402-residue polypeptide: CCA-adding enzyme (402 aa).

The ATP site is built by Gly-32 and Arg-35. Gly-32 and Arg-35 together coordinate CTP. Mg(2+)-binding residues include Asp-45 and Asp-47. ATP is bound by residues Arg-116, Asp-159, Arg-162, Arg-165, and Arg-168. CTP contacts are provided by Arg-116, Asp-159, Arg-162, Arg-165, and Arg-168.

It belongs to the tRNA nucleotidyltransferase/poly(A) polymerase family. Bacterial CCA-adding enzyme type 3 subfamily. In terms of assembly, homodimer. Requires Mg(2+) as cofactor.

It carries out the reaction a tRNA precursor + 2 CTP + ATP = a tRNA with a 3' CCA end + 3 diphosphate. The enzyme catalyses a tRNA with a 3' CCA end + 2 CTP + ATP = a tRNA with a 3' CCACCA end + 3 diphosphate. Functionally, catalyzes the addition and repair of the essential 3'-terminal CCA sequence in tRNAs without using a nucleic acid template. Adds these three nucleotides in the order of C, C, and A to the tRNA nucleotide-73, using CTP and ATP as substrates and producing inorganic pyrophosphate. tRNA 3'-terminal CCA addition is required both for tRNA processing and repair. Also involved in tRNA surveillance by mediating tandem CCA addition to generate a CCACCA at the 3' terminus of unstable tRNAs. While stable tRNAs receive only 3'-terminal CCA, unstable tRNAs are marked with CCACCA and rapidly degraded. In Streptococcus pyogenes serotype M6 (strain ATCC BAA-946 / MGAS10394), this protein is CCA-adding enzyme.